The sequence spans 905 residues: Catenin alpha-2 (905 aa).

At Thr-632 the chain carries Phosphothreonine. A phosphoserine mark is found at Ser-640, Ser-651, and Ser-853. The span at 869-879 (VKREKPEEFQT) shows a compositional bias: basic and acidic residues. The tract at residues 869–891 (VKREKPEEFQTRVRRGSQKKHIS) is disordered. The span at 880–890 (RVRRGSQKKHI) shows a compositional bias: basic residues. Ser-891 carries the post-translational modification Phosphoserine.

It belongs to the vinculin/alpha-catenin family. As to quaternary structure, interacts with CDH1 and CDH2. Interacts with ZNF639; recruits CTNNA2 to the nucleus. Interacts with F-actin.

Its subcellular location is the cell membrane. It localises to the cytoplasm. The protein resides in the cytoskeleton. The protein localises to the cell junction. It is found in the adherens junction. Its subcellular location is the cell projection. It localises to the axon. The protein resides in the nucleus. May function as a linker between cadherin adhesion receptors and the cytoskeleton to regulate cell-cell adhesion and differentiation in the nervous system. Required for proper regulation of cortical neuronal migration and neurite growth. It acts as a negative regulator of Arp2/3 complex activity and Arp2/3-mediated actin polymerization. It thereby suppresses excessive actin branching which would impair neurite growth and stability. Regulates morphological plasticity of synapses and cerebellar and hippocampal lamination during development. Functions in the control of startle modulation. The chain is Catenin alpha-2 (CTNNA2) from Pongo abelii (Sumatran orangutan).